A 303-amino-acid chain; its full sequence is Cilia- and flagella-associated protein 161 (303 aa).

As to quaternary structure, microtubule inner protein component of sperm flagellar doublet microtubules.

The protein localises to the cytoplasm. The protein resides in the cytoskeleton. It is found in the cilium axoneme. Its subcellular location is the flagellum axoneme. In terms of biological role, microtubule inner protein (MIP) part of the dynein-decorated doublet microtubules (DMTs) in cilia axoneme, which is required for motile cilia beating. The sequence is that of Cilia- and flagella-associated protein 161 from Mus musculus (Mouse).